Consider the following 241-residue polypeptide: MADYEKQKMNAAIKAAEYVRSGMIVGLGTGTTSYYLINEIGRRVREEGLKIRAVCTSRRTEDLAKQNGIEVIQGTKDQIDLTIDGADQVGMYGTLIKGGGGALLREKIVAYNSKEMYVIVDSRKIEAAHFGSFPLPVEIVPFMHMRTLENLRGICTQTDLRMNEKGEPFVTDNGNYIADMHMGMIDDPINLERSLKSIPGVVEVGLFNGIAKRIFEGTDEGCNIYSITNSGIKKEEVYFDP.

Residues 29–32, 84–87, and 97–100 contribute to the substrate site; these read TGTT, DGAD, and KGGG. The Proton acceptor role is filled by E106. Position 124 (K124) interacts with substrate.

This sequence belongs to the ribose 5-phosphate isomerase family. Homodimer.

The enzyme catalyses aldehydo-D-ribose 5-phosphate = D-ribulose 5-phosphate. Its pathway is carbohydrate degradation; pentose phosphate pathway; D-ribose 5-phosphate from D-ribulose 5-phosphate (non-oxidative stage): step 1/1. Its function is as follows. Catalyzes the reversible conversion of ribose-5-phosphate to ribulose 5-phosphate. The sequence is that of Ribose-5-phosphate isomerase A from Thermoplasma acidophilum (strain ATCC 25905 / DSM 1728 / JCM 9062 / NBRC 15155 / AMRC-C165).